The primary structure comprises 712 residues: WD repeat-containing protein 91 (712 aa).

A coiled-coil region spans residues 148 to 180 (RRTNQVQEENEVLRQKLFALQAEIHRLKKEEQQ). Phosphoserine is present on serine 221. Residues 230–243 (LLPQSKKSPSRLSP) are compositionally biased toward low complexity. Residues 230-336 (LLPQSKKSPS…EAEPCPELHT (107 aa)) form a disordered region. Phosphoserine occurs at positions 253 and 258. The span at 297 to 308 (RLQDHGKERKEL) shows a compositional bias: basic and acidic residues. WD repeat units follow at residues 371 to 410 (EHHS…QTKA), 413 to 453 (ISKS…NLCE), 480 to 520 (AAPS…QQLQ), 525 to 564 (PEPI…CAMS), 567 to 606 (AHYG…LKVS), 629 to 667 (VQVP…KVLE), and 674 to 712 (GHRA…AHKA).

Belongs to the WD repeat WDR91 family. Interacts with WDR81; involved in early to late endosome cargo transport. Interacts with BECN1; negatively regulates the PI3 kinase/PI3K activity associated with endosomal membranes.

It is found in the early endosome membrane. The protein localises to the late endosome membrane. Functions as a negative regulator of the PI3 kinase/PI3K activity associated with endosomal membranes via BECN1, a core subunit of the PI3K complex. By modifying the phosphatidylinositol 3-phosphate/PtdInsP3 content of endosomal membranes may regulate endosome fusion, recycling, sorting and early to late endosome transport. It is for instance, required for the delivery of cargos like BST2/tetherin from early to late endosome and thereby participates indirectly to their degradation by the lysosome. May play a role in meiosis. The sequence is that of WD repeat-containing protein 91 from Pongo abelii (Sumatran orangutan).